The primary structure comprises 257 residues: MLVVLSPAKTLDVETPAPVTAFSQADLLDDSQLLINRCNQLSMQDIASLMKVSDKIAGLNVARFSQWHRPFVLNNAKQALFAFQGDVYTGLQAESLSLEAINYAQMHLRILSGLYGLLRPLDLMQAYRLEMGTKLENVRGANLYQFWGSLITQRLNKALAAQGDNLLINLASNEYFKAVKIKELNGLIITPVFKDQKNGQYKVISFYAKKARGLMTRYIIEQQVTALDKLKEFDSAGYYFVESASSATELVFYRDEM.

Belongs to the UPF0246 family.

This chain is UPF0246 protein Ping_3037, found in Psychromonas ingrahamii (strain DSM 17664 / CCUG 51855 / 37).